We begin with the raw amino-acid sequence, 326 residues long: Tryptophan--tRNA ligase (326 aa).

Residues Gln-11–Thr-13 and Gly-19–Asn-20 each bind ATP. Positions Pro-12–Asn-20 match the 'HIGH' region motif. Residue Asp-135 participates in L-tryptophan binding. ATP is bound by residues Gly-147 to Asp-149, Val-186, and Lys-195 to Ser-199. A 'KMSKS' region motif is present at residues Lys-195–Ser-199.

Belongs to the class-I aminoacyl-tRNA synthetase family. Homodimer.

It is found in the cytoplasm. It catalyses the reaction tRNA(Trp) + L-tryptophan + ATP = L-tryptophyl-tRNA(Trp) + AMP + diphosphate + H(+). Functionally, catalyzes the attachment of tryptophan to tRNA(Trp). This is Tryptophan--tRNA ligase from Helicobacter pylori (strain ATCC 700392 / 26695) (Campylobacter pylori).